A 256-amino-acid chain; its full sequence is Protein FixA (256 aa).

It belongs to the ETF beta-subunit/FixA family. Heterodimer of FixA and FixB.

The protein operates within amine and polyamine metabolism; carnitine metabolism. Functionally, required for anaerobic carnitine reduction. May bring reductant to CaiA. The protein is Protein FixA of Salmonella dublin (strain CT_02021853).